The primary structure comprises 343 residues: N-acetyl-gamma-glutamyl-phosphate reductase (343 aa).

Residue cysteine 149 is part of the active site.

The protein belongs to the NAGSA dehydrogenase family. Type 1 subfamily.

Its subcellular location is the cytoplasm. The catalysed reaction is N-acetyl-L-glutamate 5-semialdehyde + phosphate + NADP(+) = N-acetyl-L-glutamyl 5-phosphate + NADPH + H(+). It functions in the pathway amino-acid biosynthesis; L-arginine biosynthesis; N(2)-acetyl-L-ornithine from L-glutamate: step 3/4. Functionally, catalyzes the NADPH-dependent reduction of N-acetyl-5-glutamyl phosphate to yield N-acetyl-L-glutamate 5-semialdehyde. The sequence is that of N-acetyl-gamma-glutamyl-phosphate reductase from Methanococcus maripaludis (strain C7 / ATCC BAA-1331).